Reading from the N-terminus, the 451-residue chain is Probable gamma-glutamyl phosphate reductase (451 aa).

It belongs to the gamma-glutamyl phosphate reductase family.

The enzyme catalyses L-glutamate 5-semialdehyde + phosphate + NADP(+) = L-glutamyl 5-phosphate + NADPH + H(+). Its pathway is amino-acid biosynthesis; L-proline biosynthesis; L-glutamate 5-semialdehyde from L-glutamate: step 2/2. Functionally, catalyzes the NADPH dependent reduction of L-gamma-glutamyl 5-phosphate into L-glutamate 5-semialdehyde and phosphate. The product spontaneously undergoes cyclization to form 1-pyrroline-5-carboxylate. This chain is Probable gamma-glutamyl phosphate reductase (pro1), found in Schizosaccharomyces pombe (strain 972 / ATCC 24843) (Fission yeast).